A 299-amino-acid chain; its full sequence is Quinolinate synthase (299 aa).

Residues His-21 and Ser-38 each coordinate iminosuccinate. A [4Fe-4S] cluster-binding site is contributed by Cys-83. Residues 109 to 111 (YVN) and Ser-126 each bind iminosuccinate. Residue Cys-170 coordinates [4Fe-4S] cluster. Residues 196–198 (HPE) and Thr-213 contribute to the iminosuccinate site. Residue Cys-256 participates in [4Fe-4S] cluster binding.

This sequence belongs to the quinolinate synthase family. Type 2 subfamily. It depends on [4Fe-4S] cluster as a cofactor.

Its subcellular location is the cytoplasm. The catalysed reaction is iminosuccinate + dihydroxyacetone phosphate = quinolinate + phosphate + 2 H2O + H(+). Its pathway is cofactor biosynthesis; NAD(+) biosynthesis; quinolinate from iminoaspartate: step 1/1. Functionally, catalyzes the condensation of iminoaspartate with dihydroxyacetone phosphate to form quinolinate. The polypeptide is Quinolinate synthase (Pyrococcus abyssi (strain GE5 / Orsay)).